A 297-amino-acid chain; its full sequence is Large ribosomal subunit protein uL18 (297 aa).

Over residues 258–267 (KKAHPKKRWT) the composition is skewed to basic residues. The segment at 258-277 (KKAHPKKRWTEKKLTREQRQ) is disordered. Basic and acidic residues predominate over residues 268–277 (EKKLTREQRQ).

Belongs to the universal ribosomal protein uL18 family. In terms of assembly, component of the large ribosomal subunit (LSU).

The protein localises to the cytoplasm. It is found in the nucleus. Its function is as follows. Component of the ribosome, a large ribonucleoprotein complex responsible for the synthesis of proteins in the cell. The small ribosomal subunit (SSU) binds messenger RNAs (mRNAs) and translates the encoded message by selecting cognate aminoacyl-transfer RNA (tRNA) molecules. The large subunit (LSU) contains the ribosomal catalytic site termed the peptidyl transferase center (PTC), which catalyzes the formation of peptide bonds, thereby polymerizing the amino acids delivered by tRNAs into a polypeptide chain. The nascent polypeptides leave the ribosome through a tunnel in the LSU and interact with protein factors that function in enzymatic processing, targeting, and the membrane insertion of nascent chains at the exit of the ribosomal tunnel. The protein is Large ribosomal subunit protein uL18 (RPL5A) of Helianthus annuus (Common sunflower).